The sequence spans 999 residues: Hypoxia up-regulated protein 1 (999 aa).

A signal peptide spans 1 to 32 (MAATVRRQRPRRLLCWTLVAVLLADLLALSDT). N-linked (GlcNAc...) asparagine glycosylation is found at Asn155, Asn222, and Asn515. The tract at residues 564–694 (VEDSPEEEST…KKQKPARKQK (131 aa)) is disordered. Phosphoserine is present on Ser567. Residues 574–583 (LTKLGNTISS) show a composition bias toward polar residues. Asn596 carries N-linked (GlcNAc...) asparagine glycosylation. Basic and acidic residues-rich tracts occupy residues 611–626 (GSKD…KEET) and 641–670 (PKGD…EEKG). N-linked (GlcNAc...) asparagine glycosylation is found at Asn830, Asn862, and Asn869. Lys883 bears the N6-acetyllysine mark. The tract at residues 909-999 (AKFTKPRPRP…QKRSSKNDEL (91 aa)) is disordered. Asn922 and Asn931 each carry an N-linked (GlcNAc...) asparagine glycan. Positions 949–962 (EEAKPILEPDKEET) are enriched in basic and acidic residues. The Prevents secretion from ER signature appears at 996-999 (NDEL).

The protein belongs to the heat shock protein 70 family. As to quaternary structure, part of a large chaperone multiprotein complex comprising DNAJB11, HSP90B1, HSPA5, HYOU, PDIA2, PDIA4, PDIA6, PPIB, SDF2L1, UGGT1 and very small amounts of ERP29, but not, or at very low levels, CALR nor CANX.

The protein resides in the endoplasmic reticulum lumen. Has a pivotal role in cytoprotective cellular mechanisms triggered by oxygen deprivation. Promotes HSPA5/BiP-mediated ATP nucleotide exchange and thereby activates the unfolded protein response (UPR) pathway in the presence of endoplasmic reticulum stress. May play a role as a molecular chaperone and participate in protein folding. The polypeptide is Hypoxia up-regulated protein 1 (HYOU1) (Cricetulus griseus (Chinese hamster)).